Consider the following 44-residue polypeptide: Thymosin beta-4 (44 aa).

2 stretches are compositionally biased toward basic and acidic residues: residues 1–25 (MSDK…ETQE) and 33–44 (ETIEQEKQTSES). The tract at residues 1–44 (MSDKPDMAEIEKFDKAKLKKTETQEKNPLPSKETIEQEKQTSES) is disordered. The residue at position 2 (Ser-2) is an N-acetylserine.

Belongs to the thymosin beta family. In terms of tissue distribution, spleen, kidney, heart, and oocytes.

The protein resides in the cytoplasm. It is found in the cytoskeleton. Plays an important role in the organization of the cytoskeleton. Binds to and sequesters actin monomers (G actin) and therefore inhibits actin polymerization. The chain is Thymosin beta-4 (tmsb4) from Xenopus laevis (African clawed frog).